Here is a 446-residue protein sequence, read N- to C-terminus: Na(+)-translocating NADH-quinone reductase subunit A (446 aa).

This sequence belongs to the NqrA family. In terms of assembly, composed of six subunits; NqrA, NqrB, NqrC, NqrD, NqrE and NqrF.

The catalysed reaction is a ubiquinone + n Na(+)(in) + NADH + H(+) = a ubiquinol + n Na(+)(out) + NAD(+). Its function is as follows. NQR complex catalyzes the reduction of ubiquinone-1 to ubiquinol by two successive reactions, coupled with the transport of Na(+) ions from the cytoplasm to the periplasm. NqrA to NqrE are probably involved in the second step, the conversion of ubisemiquinone to ubiquinol. The chain is Na(+)-translocating NADH-quinone reductase subunit A from Vibrio parahaemolyticus serotype O3:K6 (strain RIMD 2210633).